The chain runs to 208 residues: FMN-dependent NADH:quinone oxidoreductase (208 aa).

FMN is bound by residues Ser-9 and 15–17; that span reads SHS.

The protein belongs to the azoreductase type 1 family. In terms of assembly, homodimer. It depends on FMN as a cofactor.

It carries out the reaction 2 a quinone + NADH + H(+) = 2 a 1,4-benzosemiquinone + NAD(+). It catalyses the reaction N,N-dimethyl-1,4-phenylenediamine + anthranilate + 2 NAD(+) = 2-(4-dimethylaminophenyl)diazenylbenzoate + 2 NADH + 2 H(+). In terms of biological role, quinone reductase that provides resistance to thiol-specific stress caused by electrophilic quinones. Also exhibits azoreductase activity. Catalyzes the reductive cleavage of the azo bond in aromatic azo compounds to the corresponding amines. The protein is FMN-dependent NADH:quinone oxidoreductase of Bordetella petrii (strain ATCC BAA-461 / DSM 12804 / CCUG 43448).